The sequence spans 167 residues: Ribosome maturation factor RimM (167 aa).

The 72-residue stretch at 94-165 folds into the PRC barrel domain; the sequence is ENEYYYSDII…TIRITPMEGL (72 aa).

It belongs to the RimM family. Binds ribosomal protein uS19.

The protein resides in the cytoplasm. An accessory protein needed during the final step in the assembly of 30S ribosomal subunit, possibly for assembly of the head region. Essential for efficient processing of 16S rRNA. May be needed both before and after RbfA during the maturation of 16S rRNA. It has affinity for free ribosomal 30S subunits but not for 70S ribosomes. The sequence is that of Ribosome maturation factor RimM from Staphylococcus haemolyticus (strain JCSC1435).